We begin with the raw amino-acid sequence, 212 residues long: Ribosome maturation factor RimP (212 aa).

Belongs to the RimP family.

The protein localises to the cytoplasm. Functionally, required for maturation of 30S ribosomal subunits. This chain is Ribosome maturation factor RimP, found in Variovorax paradoxus (strain S110).